We begin with the raw amino-acid sequence, 323 residues long: Annexin A3 (323 aa).

N-acetylalanine is present on A2. Annexin repeat units follow at residues 18–89 (FSPS…ALVT), 90–161 (PPAV…TLAD), 173–245 (HLAK…AIVN), and 249–320 (NTPA…KICG). At T267 the chain carries Phosphothreonine.

The protein belongs to the annexin family.

In terms of biological role, inhibitor of phospholipase A2, also possesses anti-coagulant properties. Also cleaves the cyclic bond of inositol 1,2-cyclic phosphate to form inositol 1-phosphate. This is Annexin A3 (ANXA3) from Homo sapiens (Human).